The following is a 339-amino-acid chain: tRNA dimethylallyltransferase (339 aa).

Position 36–43 (36–43) interacts with ATP; that stretch reads GPTGSGKT. 38–43 lines the substrate pocket; that stretch reads TGSGKT. The interaction with substrate tRNA stretch occupies residues 61-64; that stretch reads DSMQ.

This sequence belongs to the IPP transferase family. Monomer. Requires Mg(2+) as cofactor.

It catalyses the reaction adenosine(37) in tRNA + dimethylallyl diphosphate = N(6)-dimethylallyladenosine(37) in tRNA + diphosphate. Its function is as follows. Catalyzes the transfer of a dimethylallyl group onto the adenine at position 37 in tRNAs that read codons beginning with uridine, leading to the formation of N6-(dimethylallyl)adenosine (i(6)A). The protein is tRNA dimethylallyltransferase of Chlamydia trachomatis serovar A (strain ATCC VR-571B / DSM 19440 / HAR-13).